The primary structure comprises 200 residues: NAD(P)H dehydrogenase (quinone) (200 aa).

Positions 7–199 (LAIVFYSSTG…RQVELTAKLL (193 aa)) constitute a Flavodoxin-like domain. Residues 13–18 (SSTGTG), 86–88 (TRF), 121–127 (SAQNVNG), and His-142 contribute to the FMN site.

Belongs to the WrbA family. Homotetramer. FMN is required as a cofactor.

The enzyme catalyses a quinone + NADH + H(+) = a quinol + NAD(+). The catalysed reaction is a quinone + NADPH + H(+) = a quinol + NADP(+). The polypeptide is NAD(P)H dehydrogenase (quinone) (Deinococcus radiodurans (strain ATCC 13939 / DSM 20539 / JCM 16871 / CCUG 27074 / LMG 4051 / NBRC 15346 / NCIMB 9279 / VKM B-1422 / R1)).